A 1067-amino-acid chain; its full sequence is MSRRKQAKPQHINWEEGQGEQPQQLPSPDLAEALAAEEPGAPVNSPGNCDEASEDSIPVKRPRREDTHICNKCCAEFFSLSEFMEHKKSCTKTPPVLIMNDSEGPVPSEDFSRAALSHQLGSPSNKDSLQENGSSSGDLKKLGTDSILYLKTEATQPSTPQDISYLPKGKVANTNVTLQALRGTKVAVNQRGAEAPMAPMPAAQGIPWVLEQILCLQQQQLQQIQLTEQIRVQVNMWAAHALHSGVAGADTLKALSSHVSQQVSVSQQVSAAVALLSQKASNPALSLDALKQAKLPHASVPSAASPLSSGLTSFTLKPDGTRVLPNFVSRLPSALLPQTPGSVLLQSPFSAVTLDQSKKGKGKPQNLSASASVLDVKAKDEVVLGKHKCRYCPKVFGTDSSLQIHLRSHTGERPYVCPICGHRFTTKGNLKVHLQRHPEVKANPQLLAEFQDKGAVSAASHYALPVPVPADESSLSVDAEPVPVTGTPSLGLPQKLTSGPNSRDLMGGSLPNDMQPGPSPESEAGLPLLGVGMIHNPPKAGGFQGTGAPESGSETLKLQQLVENIDKATTDPNECLICHRVLSCQSSLKMHYRTHTGERPFQCKICGRAFSTKGNLKTHLGVHRTNTTVKTQHSCPICQKKFTNAVMLQQHIRMHMGGQIPNTPLPESPCDFTAPEPVAVSENGSASGVCQDDAAEGMEAEEVCSQDVPSGPSTVSLPVPSAHLASPSLGFSVLASLDTQGKGALPALALQRQSSRENSSLEGGDTGPANDSSLLVGDQECQSRSPDATETMCYQAVSPANSQAGSVKSRSPEGHKAEGVESCRVDTEGRTSLPPTFIRAQPTFVKVEVPGTFVGPPSMPSGMPPLLASQPQPRRQAKQHCCTRCGKNFSSASALQIHERTHTGEKPFVCNICGRAFTTKGNLKVHYMTHGANNNSARRGRKLAIENPMAALSAEGKRAPEVFSKELLSPAVSVDPASWNQYTSVLNGGLAMKTNEISVIQSGGIPTLPVSLGASSVVSNGTISKLDGSQTGVSMPMSGNGEKLAVPDGMAKHQFPHFLEENKIAVS.

The interval 1–62 (MSRRKQAKPQ…SEDSIPVKRP (62 aa)) is disordered. Over residues 15–42 (EEGQGEQPQQLPSPDLAEALAAEEPGAP) the composition is skewed to low complexity. Serine 53 carries the phosphoserine modification. The C2H2-type 1; atypical zinc finger occupies 68–90 (HICNKCCAEFFSLSEFMEHKKSC). Residues 115 to 140 (ALSHQLGSPSNKDSLQENGSSSGDLK) are disordered. The span at 119–137 (QLGSPSNKDSLQENGSSSG) shows a compositional bias: polar residues. Residue lysine 151 forms a Glycyl lysine isopeptide (Lys-Gly) (interchain with G-Cter in SUMO1); alternate linkage. Residue lysine 151 forms a Glycyl lysine isopeptide (Lys-Gly) (interchain with G-Cter in SUMO2); alternate linkage. Residues lysine 170, lysine 185, and lysine 291 each participate in a glycyl lysine isopeptide (Lys-Gly) (interchain with G-Cter in SUMO2) cross-link. Serine 308 carries the post-translational modification Phosphoserine. Lysine 317 participates in a covalent cross-link: Glycyl lysine isopeptide (Lys-Gly) (interchain with G-Cter in SUMO1); alternate. A Glycyl lysine isopeptide (Lys-Gly) (interchain with G-Cter in SUMO2); alternate cross-link involves residue lysine 317. Lysine 377 is covalently cross-linked (Glycyl lysine isopeptide (Lys-Gly) (interchain with G-Cter in SUMO2)). A Glycyl lysine isopeptide (Lys-Gly) (interchain with G-Cter in SUMO1); alternate cross-link involves residue lysine 379. A Glycyl lysine isopeptide (Lys-Gly) (interchain with G-Cter in SUMO2); alternate cross-link involves residue lysine 379. 2 C2H2-type zinc fingers span residues 387–409 (HKCR…LRSH) and 415–437 (YVCP…LQRH). Residue lysine 441 forms a Glycyl lysine isopeptide (Lys-Gly) (interchain with G-Cter in SUMO2) linkage. Residues 471–521 (DESSLSVDAEPVPVTGTPSLGLPQKLTSGPNSRDLMGGSLPNDMQPGPSPE) form a disordered region. Residue lysine 557 forms a Glycyl lysine isopeptide (Lys-Gly) (interchain with G-Cter in SUMO2) linkage. 2 consecutive C2H2-type zinc fingers follow at residues 573-595 (NECL…YRTH) and 601-623 (FQCK…LGVH). Glycyl lysine isopeptide (Lys-Gly) (interchain with G-Cter in SUMO2) cross-links involve residues lysine 604 and lysine 630. The C2H2-type 6 zinc-finger motif lies at 633 to 655 (HSCPICQKKFTNAVMLQQHIRMH). Disordered regions lie at residues 682-716 (ENGS…STVS) and 752-835 (RQSS…SLPP). The span at 693–704 (DAAEGMEAEEVC) shows a compositional bias: acidic residues. 2 stretches are compositionally biased toward polar residues: residues 707-716 (DVPSGPSTVS) and 752-761 (RQSSRENSSL). Serine 785 and serine 798 each carry phosphoserine. Over residues 798–809 (SPANSQAGSVKS) the composition is skewed to polar residues. Basic and acidic residues predominate over residues 810 to 829 (RSPEGHKAEGVESCRVDTEG). Lysine 846 participates in a covalent cross-link: Glycyl lysine isopeptide (Lys-Gly) (interchain with G-Cter in SUMO1); alternate. Lysine 846 participates in a covalent cross-link: Glycyl lysine isopeptide (Lys-Gly) (interchain with G-Cter in SUMO2); alternate. A C2H2-type 7 zinc finger spans residues 880–902 (HCCTRCGKNFSSASALQIHERTH). Lysine 906 participates in a covalent cross-link: Glycyl lysine isopeptide (Lys-Gly) (interchain with G-Cter in SUMO2). The C2H2-type 8 zinc-finger motif lies at 908–930 (FVCNICGRAFTTKGNLKVHYMTH). Glycyl lysine isopeptide (Lys-Gly) (interchain with G-Cter in SUMO2) cross-links involve residues lysine 942 and lysine 957. Serine 1029 bears the Phosphoserine mark.

Belongs to the sal C2H2-type zinc-finger protein family. Interacts with POU5F1/OCT4. Interacts with NANOG. Interacts with BEND3. Interacts with NSD2 (via PHD-type zinc fingers 1, 2 and 3). Interacts with NRBP1. Post-translationally, sumoylation with both SUMO1 and SUMO2 regulates the stability, subcellular localization, transcriptional activity, and may reduce interaction with POU5F1/OCT4.

It localises to the cytoplasm. Its subcellular location is the nucleus. Transcription factor with a key role in the maintenance and self-renewal of embryonic and hematopoietic stem cells. The protein is Sal-like protein 4 (Sall4) of Mus musculus (Mouse).